The sequence spans 186 residues: Peptidyl-tRNA hydrolase (186 aa).

Tyr-15 is a tRNA binding site. His-20 serves as the catalytic Proton acceptor. Residues Tyr-64, Asn-66, and Asn-112 each coordinate tRNA.

The protein belongs to the PTH family. In terms of assembly, monomer.

It is found in the cytoplasm. It carries out the reaction an N-acyl-L-alpha-aminoacyl-tRNA + H2O = an N-acyl-L-amino acid + a tRNA + H(+). Functionally, hydrolyzes ribosome-free peptidyl-tRNAs (with 1 or more amino acids incorporated), which drop off the ribosome during protein synthesis, or as a result of ribosome stalling. Catalyzes the release of premature peptidyl moieties from peptidyl-tRNA molecules trapped in stalled 50S ribosomal subunits, and thus maintains levels of free tRNAs and 50S ribosomes. This is Peptidyl-tRNA hydrolase from Azobacteroides pseudotrichonymphae genomovar. CFP2.